A 112-amino-acid chain; its full sequence is Peptidyl-prolyl cis-trans isomerase (112 aa).

The segment at 1–22 (MGVEKQVISSGNGQDFPKPGDR) is disordered. The PPIase FKBP-type domain occupies 20–108 (GDRITMHYTG…LFDVELLAIN (89 aa)).

It belongs to the FKBP-type PPIase family. FKBP1 subfamily.

It localises to the cytoplasm. It is found in the nucleus. The catalysed reaction is [protein]-peptidylproline (omega=180) = [protein]-peptidylproline (omega=0). Functionally, PPIases accelerate the folding of proteins. It catalyzes the cis-trans isomerization of proline imidic peptide bonds in oligopeptides. Has an important role in sexual development and serves as the target for rapamycin action. The protein is Peptidyl-prolyl cis-trans isomerase (fkh1) of Schizosaccharomyces pombe (strain 972 / ATCC 24843) (Fission yeast).